Consider the following 124-residue polypeptide: Tax1-binding protein 3 (124 aa).

At serine 2 the chain carries N-acetylserine. The PDZ domain maps to 15–112 (RVEIHKLRQG…EVVRLLVTRQ (98 aa)). Phosphoserine is present on serine 61.

As to quaternary structure, interacts (via its PDZ domain) with GLS2. Interacts (via its PDZ domain) with RTKN (via the C-terminal region); this interaction facilitates Rho-mediated activation of the FOS serum response element (SRE). Interacts (via PDZ domain) with ARHGEF16. Interacts (via PDZ domain) with KCNJ4 (via C-terminus). Competes with LIN7A for KCNJ4 binding. Interacts (via its PDZ domain) with CTNNB1; this interaction inhibits the transcriptional activity of CTNNB1. Interacts with ADGRB2.

It localises to the cytoplasm. The protein resides in the nucleus. It is found in the cell membrane. In terms of biological role, may regulate a number of protein-protein interactions by competing for PDZ domain binding sites. Binds CTNNB1 and may thereby act as an inhibitor of the Wnt signaling pathway. Competes with LIN7A for KCNJ4 binding, and thereby promotes KCNJ4 internalization. May play a role in the Rho signaling pathway. The chain is Tax1-binding protein 3 from Mus musculus (Mouse).